Reading from the N-terminus, the 439-residue chain is 3-phosphoshikimate 1-carboxyvinyltransferase (439 aa).

Residues K27, S28, and R32 each contribute to the 3-phosphoshikimate site. K27 is a binding site for phosphoenolpyruvate. 2 residues coordinate phosphoenolpyruvate: G101 and R130. Positions 175, 177, 326, and 353 each coordinate 3-phosphoshikimate. Q177 contributes to the phosphoenolpyruvate binding site. D326 serves as the catalytic Proton acceptor. R357 and R399 together coordinate phosphoenolpyruvate.

The protein belongs to the EPSP synthase family. In terms of assembly, monomer.

The protein resides in the cytoplasm. The enzyme catalyses 3-phosphoshikimate + phosphoenolpyruvate = 5-O-(1-carboxyvinyl)-3-phosphoshikimate + phosphate. It participates in metabolic intermediate biosynthesis; chorismate biosynthesis; chorismate from D-erythrose 4-phosphate and phosphoenolpyruvate: step 6/7. Catalyzes the transfer of the enolpyruvyl moiety of phosphoenolpyruvate (PEP) to the 5-hydroxyl of shikimate-3-phosphate (S3P) to produce enolpyruvyl shikimate-3-phosphate and inorganic phosphate. The sequence is that of 3-phosphoshikimate 1-carboxyvinyltransferase from Synechococcus sp. (strain CC9311).